The sequence spans 221 residues: Deoxyribose-phosphate aldolase 1 (221 aa).

Catalysis depends on aspartate 89, which acts as the Proton donor/acceptor. The active-site Schiff-base intermediate with acetaldehyde is the lysine 152. Lysine 181 acts as the Proton donor/acceptor in catalysis.

Belongs to the DeoC/FbaB aldolase family. DeoC type 1 subfamily.

It is found in the cytoplasm. It catalyses the reaction 2-deoxy-D-ribose 5-phosphate = D-glyceraldehyde 3-phosphate + acetaldehyde. It functions in the pathway carbohydrate degradation; 2-deoxy-D-ribose 1-phosphate degradation; D-glyceraldehyde 3-phosphate and acetaldehyde from 2-deoxy-alpha-D-ribose 1-phosphate: step 2/2. Its function is as follows. Catalyzes a reversible aldol reaction between acetaldehyde and D-glyceraldehyde 3-phosphate to generate 2-deoxy-D-ribose 5-phosphate. In Oceanobacillus iheyensis (strain DSM 14371 / CIP 107618 / JCM 11309 / KCTC 3954 / HTE831), this protein is Deoxyribose-phosphate aldolase 1.